Here is a 143-residue protein sequence, read N- to C-terminus: MPPKKKLVKTFTLQLPAGQATPAPPVGPALGQHGVNIMEFCKSYNAQTESQRGDIVPAEISVYEDRTFTFVLKTPPAARLLIKAAGVAKGSGVPHMEKVGQVSRAQLREIAEKKMADLNANDLDQAEKIIAGTARSMGLNVVD.

This sequence belongs to the universal ribosomal protein uL11 family. Part of the ribosomal stalk of the 50S ribosomal subunit. Interacts with L10 and the large rRNA to form the base of the stalk. L10 forms an elongated spine to which L12 dimers bind in a sequential fashion forming a multimeric L10(L12)X complex. In terms of processing, one or more lysine residues are methylated.

Its function is as follows. Forms part of the ribosomal stalk which helps the ribosome interact with GTP-bound translation factors. The sequence is that of Large ribosomal subunit protein uL11 from Salinispora tropica (strain ATCC BAA-916 / DSM 44818 / JCM 13857 / NBRC 105044 / CNB-440).